The following is a 139-amino-acid chain: Protein COLD-REGULATED 15A, chloroplastic (139 aa).

A chloroplast-targeting transit peptide spans 1–40; it reads MAMSFSGAVLTGMASSFHSGAKQSSFGAVRVGQKTQFVVV.

Belongs to the COR15 protein family. In terms of assembly, forms homooligomers which interact with potential stromal substrates in the stroma of chloroplasts. Interacts with the galactose headgroup of the chloroplast lipid monogalactosyldiacylglycerol (MGDG).

It is found in the plastid. It localises to the chloroplast stroma. Its function is as follows. Exhibits cryoprotective activity toward stromal substrates (e.g. LDH and rubisco) in chloroplasts and in protoplasts and confers freezing tolerance to plants in a CBF-dependent manner. Protectant against various stresses (e.g. cold, drought and heat stress) by preventing protein aggregation (e.g. LDH) and attenuating enzyme inactivation. Influences the intrinsic curvature of the inner membrane of the chloroplast envelope, and modulates the freeze-induced lamellar-to-hexagonal II phase transitions that occur in regions where the plasma membrane is brought into close apposition with the chloroplast envelope during freeze-induced osmotic contraction. Mediates a shift in the melting curves of phospholipids-containing membranes to lower temperatures. Involved in the regulation of leaf senescence by abscisic acid (ABA) in a VNI2-dependent manner. This is Protein COLD-REGULATED 15A, chloroplastic from Arabidopsis thaliana (Mouse-ear cress).